Consider the following 361-residue polypeptide: Phosphoserine aminotransferase (361 aa).

Arg-43 serves as a coordination point for L-glutamate. Pyridoxal 5'-phosphate contacts are provided by residues 77 to 78 (AS), Trp-103, Thr-153, Asp-173, and Gln-196. Lys-197 carries the post-translational modification N6-(pyridoxal phosphate)lysine. 238–239 (NT) is a pyridoxal 5'-phosphate binding site.

It belongs to the class-V pyridoxal-phosphate-dependent aminotransferase family. SerC subfamily. Homodimer. The cofactor is pyridoxal 5'-phosphate.

The protein localises to the cytoplasm. It catalyses the reaction O-phospho-L-serine + 2-oxoglutarate = 3-phosphooxypyruvate + L-glutamate. It carries out the reaction 4-(phosphooxy)-L-threonine + 2-oxoglutarate = (R)-3-hydroxy-2-oxo-4-phosphooxybutanoate + L-glutamate. The protein operates within amino-acid biosynthesis; L-serine biosynthesis; L-serine from 3-phospho-D-glycerate: step 2/3. It participates in cofactor biosynthesis; pyridoxine 5'-phosphate biosynthesis; pyridoxine 5'-phosphate from D-erythrose 4-phosphate: step 3/5. Its function is as follows. Catalyzes the reversible conversion of 3-phosphohydroxypyruvate to phosphoserine and of 3-hydroxy-2-oxo-4-phosphonooxybutanoate to phosphohydroxythreonine. This is Phosphoserine aminotransferase from Pseudomonas syringae pv. syringae (strain B728a).